A 462-amino-acid chain; its full sequence is ATP synthase subunit beta (462 aa).

151-158 (GGAGVGKT) serves as a coordination point for ATP.

It belongs to the ATPase alpha/beta chains family. In terms of assembly, F-type ATPases have 2 components, CF(1) - the catalytic core - and CF(0) - the membrane proton channel. CF(1) has five subunits: alpha(3), beta(3), gamma(1), delta(1), epsilon(1). CF(0) has four main subunits: a(1), b(1), b'(1) and c(9-12).

It localises to the cell inner membrane. The catalysed reaction is ATP + H2O + 4 H(+)(in) = ADP + phosphate + 5 H(+)(out). In terms of biological role, produces ATP from ADP in the presence of a proton gradient across the membrane. The catalytic sites are hosted primarily by the beta subunits. The sequence is that of ATP synthase subunit beta from Chlorobium chlorochromatii (strain CaD3).